Here is a 575-residue protein sequence, read N- to C-terminus: 5-aminolevulinate synthase, mitochondrial (575 aa).

The transit peptide at 1 to 55 (MESITRVSMSVCPFVKSSSAQALRQLSKNSALTSQARQCPFMGAALNAKESTRSY) directs the protein to the mitochondrion. Substrate is bound by residues arginine 124, serine 237, and lysine 256. Pyridoxal 5'-phosphate is bound by residues serine 289, histidine 317, and threonine 361. Lysine 364 is an active-site residue. At lysine 364 the chain carries N6-(pyridoxal phosphate)lysine. Pyridoxal 5'-phosphate contacts are provided by threonine 393 and threonine 394. Threonine 479 lines the substrate pocket.

It belongs to the class-II pyridoxal-phosphate-dependent aminotransferase family. As to quaternary structure, homodimer. Requires pyridoxal 5'-phosphate as cofactor.

It is found in the mitochondrion matrix. It carries out the reaction succinyl-CoA + glycine + H(+) = 5-aminolevulinate + CO2 + CoA. The protein operates within porphyrin-containing compound metabolism; protoporphyrin-IX biosynthesis; 5-aminolevulinate from glycine: step 1/1. Functionally, catalyzes the synthesis of 5-aminolevulinate (ALA) from succinyl-CoA and glycine, the first and rate-limiting step in heme biosynthesis. The chain is 5-aminolevulinate synthase, mitochondrial (HEM1) from Debaryomyces hansenii (strain ATCC 36239 / CBS 767 / BCRC 21394 / JCM 1990 / NBRC 0083 / IGC 2968) (Yeast).